The primary structure comprises 236 residues: Ubiquinone biosynthesis O-methyltransferase (236 aa).

Residues R39, G59, D80, and M124 each coordinate S-adenosyl-L-methionine.

This sequence belongs to the methyltransferase superfamily. UbiG/COQ3 family.

It catalyses the reaction a 3-demethylubiquinol + S-adenosyl-L-methionine = a ubiquinol + S-adenosyl-L-homocysteine + H(+). It carries out the reaction a 3-(all-trans-polyprenyl)benzene-1,2-diol + S-adenosyl-L-methionine = a 2-methoxy-6-(all-trans-polyprenyl)phenol + S-adenosyl-L-homocysteine + H(+). The protein operates within cofactor biosynthesis; ubiquinone biosynthesis. In terms of biological role, O-methyltransferase that catalyzes the 2 O-methylation steps in the ubiquinone biosynthetic pathway. The protein is Ubiquinone biosynthesis O-methyltransferase of Shewanella sp. (strain MR-4).